The chain runs to 414 residues: Serine--tRNA ligase (414 aa).

230–232 lines the L-serine pocket; the sequence is TAE. Residue 261–263 participates in ATP binding; the sequence is RKE. Glu-284 contributes to the L-serine binding site. 348-351 lines the ATP pocket; that stretch reads EISS. Ser-382 contributes to the L-serine binding site.

The protein belongs to the class-II aminoacyl-tRNA synthetase family. Type-1 seryl-tRNA synthetase subfamily. In terms of assembly, homodimer. The tRNA molecule binds across the dimer.

The protein resides in the cytoplasm. It carries out the reaction tRNA(Ser) + L-serine + ATP = L-seryl-tRNA(Ser) + AMP + diphosphate + H(+). It catalyses the reaction tRNA(Sec) + L-serine + ATP = L-seryl-tRNA(Sec) + AMP + diphosphate + H(+). Its pathway is aminoacyl-tRNA biosynthesis; selenocysteinyl-tRNA(Sec) biosynthesis; L-seryl-tRNA(Sec) from L-serine and tRNA(Sec): step 1/1. Its function is as follows. Catalyzes the attachment of serine to tRNA(Ser). Is also able to aminoacylate tRNA(Sec) with serine, to form the misacylated tRNA L-seryl-tRNA(Sec), which will be further converted into selenocysteinyl-tRNA(Sec). The sequence is that of Serine--tRNA ligase from Sulfurovum sp. (strain NBC37-1).